Here is a 323-residue protein sequence, read N- to C-terminus: DNA-directed RNA polymerase subunit alpha (323 aa).

Positions 1-233 (MGQEKVTVST…DLFIPFFHAE (233 aa)) are alpha N-terminal domain (alpha-NTD). The alpha C-terminal domain (alpha-CTD) stretch occupies residues 264-323 (IALKYIYIDQSELPPRVYNCLKRSNINTFLELLNNSQEELMKIQDFRIEDVKHILDVLEI).

Belongs to the RNA polymerase alpha chain family. In plastids the minimal PEP RNA polymerase catalytic core is composed of four subunits: alpha, beta, beta', and beta''. When a (nuclear-encoded) sigma factor is associated with the core the holoenzyme is formed, which can initiate transcription.

It localises to the plastid. Its subcellular location is the chloroplast. It catalyses the reaction RNA(n) + a ribonucleoside 5'-triphosphate = RNA(n+1) + diphosphate. Its function is as follows. DNA-dependent RNA polymerase catalyzes the transcription of DNA into RNA using the four ribonucleoside triphosphates as substrates. The polypeptide is DNA-directed RNA polymerase subunit alpha (Morus indica (Mulberry)).